Consider the following 306-residue polypeptide: Polyisoprenyl-teichoic acid--peptidoglycan teichoic acid transferase TagU (306 aa).

Topologically, residues 1–11 (MRNERRKKKKT) are cytoplasmic. Residues 12-32 (LLLTILTIIGLLVLGTGGYAY) traverse the membrane as a helical; Signal-anchor for type II membrane protein segment. The Extracellular segment spans residues 33–306 (YLWHKAASTV…TKELKESLEK (274 aa)).

It belongs to the LytR/CpsA/Psr (LCP) family. Interacts with MreB. Interacts with FloT.

It is found in the cell membrane. It localises to the membrane raft. The protein operates within cell wall biogenesis. Functionally, may catalyze the final step in cell wall teichoic acid biosynthesis, the transfer of the anionic cell wall polymers (APs) from their lipid-linked precursor to the cell wall peptidoglycan (PG). The polypeptide is Polyisoprenyl-teichoic acid--peptidoglycan teichoic acid transferase TagU (Bacillus subtilis (strain 168)).